We begin with the raw amino-acid sequence, 314 residues long: DNA-directed RNA polymerase subunit alpha (314 aa).

Residues 1-227 (MTTFEIECIE…ELLFPLKEIN (227 aa)) form an alpha N-terminal domain (alpha-NTD) region. The segment at 237 to 314 (IEDSKINQIL…LPKEKTSKSN (78 aa)) is alpha C-terminal domain (alpha-CTD).

This sequence belongs to the RNA polymerase alpha chain family. As to quaternary structure, in plastids the minimal PEP RNA polymerase catalytic core is composed of four subunits: alpha, beta, beta', and beta''. When a (nuclear-encoded) sigma factor is associated with the core the holoenzyme is formed, which can initiate transcription.

Its subcellular location is the plastid. The protein resides in the chloroplast. The enzyme catalyses RNA(n) + a ribonucleoside 5'-triphosphate = RNA(n+1) + diphosphate. DNA-dependent RNA polymerase catalyzes the transcription of DNA into RNA using the four ribonucleoside triphosphates as substrates. This chain is DNA-directed RNA polymerase subunit alpha, found in Pyrenomonas salina.